A 334-amino-acid chain; its full sequence is D-alanine--D-alanine ligase (334 aa).

The region spanning 124 to 329 (KMWFSALGIP…FAQYLSGNIL (206 aa)) is the ATP-grasp domain. 154-209 (ALAKWGSIFIKAASQGSSVGCYRVDSIEQLASSLEEAFTFSPYVVIEKTITARELE) provides a ligand contact to ATP. Mg(2+)-binding residues include Asp283, Glu296, and Asn298.

Belongs to the D-alanine--D-alanine ligase family. The cofactor is Mg(2+). It depends on Mn(2+) as a cofactor.

The protein resides in the cytoplasm. The catalysed reaction is 2 D-alanine + ATP = D-alanyl-D-alanine + ADP + phosphate + H(+). The protein operates within cell wall biogenesis; peptidoglycan biosynthesis. In terms of biological role, cell wall formation. This is D-alanine--D-alanine ligase from Shewanella pealeana (strain ATCC 700345 / ANG-SQ1).